A 224-amino-acid chain; its full sequence is Uracil-DNA glycosylase (224 aa).

Aspartate 65 acts as the Proton acceptor in catalysis.

Belongs to the uracil-DNA glycosylase (UDG) superfamily. UNG family.

The protein resides in the cytoplasm. It catalyses the reaction Hydrolyzes single-stranded DNA or mismatched double-stranded DNA and polynucleotides, releasing free uracil.. Functionally, excises uracil residues from the DNA which can arise as a result of misincorporation of dUMP residues by DNA polymerase or due to deamination of cytosine. The protein is Uracil-DNA glycosylase of Buchnera aphidicola subsp. Baizongia pistaciae (strain Bp).